Here is a 152-residue protein sequence, read N- to C-terminus: MQLHYVFSHLQNSFRARKSLASVPNCNSVLELCAVLYHQGFLSSIQRGDIHGPDALPTITTRQNVATRRLWLGLKYFEGKPVLHYIRAVSKPSRKVNLTPSELLQFAKGRKVSFVNGLEPAEVGIVETKHGIMSIDDAIKNNLGGNVICRVK.

Belongs to the universal ribosomal protein uS8 family. As to quaternary structure, component of the mitochondrial small ribosomal subunit (mt-SSU). Mature yeast 74S mitochondrial ribosomes consist of a small (37S) and a large (54S) subunit. The 37S small subunit contains a 15S ribosomal RNA (15S mt-rRNA) and at least 32 different proteins. The 54S large subunit contains a 21S rRNA (21S mt-rRNA) and at least 45 different proteins.

It localises to the mitochondrion. Component of the mitochondrial ribosome (mitoribosome), a dedicated translation machinery responsible for the synthesis of mitochondrial genome-encoded proteins, including at least some of the essential transmembrane subunits of the mitochondrial respiratory chain. The mitoribosomes are attached to the mitochondrial inner membrane and translation products are cotranslationally integrated into the membrane. The sequence is that of Small ribosomal subunit protein uS8m (mrps8) from Schizosaccharomyces pombe (strain 972 / ATCC 24843) (Fission yeast).